The chain runs to 477 residues: Bifunctional protein HldE (477 aa).

Residues 1-318 (MKLSMPRFDQ…RAIQREEGSE (318 aa)) are ribokinase. 194–197 (NLSE) serves as a coordination point for ATP. Residue Asp-263 is part of the active site. The cytidylyltransferase stretch occupies residues 343–477 (FTNGCFDILH…EKIRKTDKAE (135 aa)).

In the N-terminal section; belongs to the carbohydrate kinase PfkB family. This sequence in the C-terminal section; belongs to the cytidylyltransferase family. As to quaternary structure, homodimer.

The enzyme catalyses D-glycero-beta-D-manno-heptose 7-phosphate + ATP = D-glycero-beta-D-manno-heptose 1,7-bisphosphate + ADP + H(+). It catalyses the reaction D-glycero-beta-D-manno-heptose 1-phosphate + ATP + H(+) = ADP-D-glycero-beta-D-manno-heptose + diphosphate. It participates in nucleotide-sugar biosynthesis; ADP-L-glycero-beta-D-manno-heptose biosynthesis; ADP-L-glycero-beta-D-manno-heptose from D-glycero-beta-D-manno-heptose 7-phosphate: step 1/4. Its pathway is nucleotide-sugar biosynthesis; ADP-L-glycero-beta-D-manno-heptose biosynthesis; ADP-L-glycero-beta-D-manno-heptose from D-glycero-beta-D-manno-heptose 7-phosphate: step 3/4. In terms of biological role, catalyzes the phosphorylation of D-glycero-D-manno-heptose 7-phosphate at the C-1 position to selectively form D-glycero-beta-D-manno-heptose-1,7-bisphosphate. Its function is as follows. Catalyzes the ADP transfer from ATP to D-glycero-beta-D-manno-heptose 1-phosphate, yielding ADP-D-glycero-beta-D-manno-heptose. The chain is Bifunctional protein HldE from Pseudomonas fluorescens (strain ATCC BAA-477 / NRRL B-23932 / Pf-5).